The sequence spans 147 residues: Basic phospholipase A2 beta-bungarotoxin A2 chain (147 aa).

A signal peptide spans 1–19 (MYPAHLLVLSAVCVSLLGA). Residues 20–27 (ANIPPYPL) constitute a propeptide that is removed on maturation. Disulfide bonds link cysteine 54–cysteine 146, cysteine 56–cysteine 72, cysteine 71–cysteine 127, cysteine 78–cysteine 120, cysteine 88–cysteine 113, and cysteine 106–cysteine 118. Tyrosine 55, glycine 57, and glycine 59 together coordinate Ca(2+). Histidine 75 is an active-site residue. Aspartate 76 contributes to the Ca(2+) binding site. The active site involves aspartate 121.

Belongs to the phospholipase A2 family. Group I subfamily. D49 sub-subfamily. Heterodimer; disulfide-linked. The A chains have phospholipase A2 activity and the B chains show homology with the basic protease inhibitors. The cofactor is Ca(2+). As to expression, expressed by the venom gland.

The protein localises to the secreted. It carries out the reaction a 1,2-diacyl-sn-glycero-3-phosphocholine + H2O = a 1-acyl-sn-glycero-3-phosphocholine + a fatty acid + H(+). Functionally, snake venom phospholipase A2 (PLA2) that inhibits neuromuscular transmission by blocking acetylcholine release from the nerve termini. PLA2 catalyzes the calcium-dependent hydrolysis of the 2-acyl groups in 3-sn-phosphoglycerides. This Bungarus caeruleus (Indian krait) protein is Basic phospholipase A2 beta-bungarotoxin A2 chain.